The chain runs to 490 residues: Glycine--tRNA ligase (490 aa).

Arginine 99 and glutamate 163 together coordinate substrate. ATP is bound by residues 195–197 (RNE), 205–210 (FRTREF), 282–283 (EL), and 326–329 (GLTR). Residue 210 to 214 (FEQME) coordinates substrate. Residue 322–326 (EPAAG) coordinates substrate. Residues 470-490 (PVEMGGEPWPESGVQEAGGLY) form a disordered region.

It belongs to the class-II aminoacyl-tRNA synthetase family. Homodimer.

The protein localises to the cytoplasm. The catalysed reaction is tRNA(Gly) + glycine + ATP = glycyl-tRNA(Gly) + AMP + diphosphate. Functionally, catalyzes the attachment of glycine to tRNA(Gly). This is Glycine--tRNA ligase from Bifidobacterium longum (strain NCC 2705).